Here is a 304-residue protein sequence, read N- to C-terminus: MTQETLKSDIKALLKERNAVLLAHNYMRDEVQEIADITGDSLALSIEAAKTDADVIVFCGVHFMAESASILAPEKTVLLPRLDAGCPMADMVSVEALREMKAKLPGVPVVTYVNSSAAVKAESDICCTSANAVKVVQSMSEKEIIFAPDRNLGSYIARFTDKKFHLWEGYCPTHERLRPEVVKELKQANPDAPFVCHPECNPKVVELADHVCSTTGMYDYCKKSGAKRFIIGTEAGILWRLKRESPDKEFILASPALICPNMKLTSLEDVFEALQQMTPVVKVTEEIRIPAKRALDRMLAIPRD.

Iminosuccinate contacts are provided by His-24 and Ser-41. Residue Cys-86 participates in [4Fe-4S] cluster binding. Iminosuccinate is bound by residues 112 to 114 (YVN) and Ser-129. Cys-171 is a [4Fe-4S] cluster binding site. Residues 197-199 (HPE) and Thr-214 contribute to the iminosuccinate site. Cys-259 is a [4Fe-4S] cluster binding site.

It belongs to the quinolinate synthase family. Type 2 subfamily. [4Fe-4S] cluster is required as a cofactor.

It localises to the cytoplasm. It catalyses the reaction iminosuccinate + dihydroxyacetone phosphate = quinolinate + phosphate + 2 H2O + H(+). It functions in the pathway cofactor biosynthesis; NAD(+) biosynthesis; quinolinate from iminoaspartate: step 1/1. Functionally, catalyzes the condensation of iminoaspartate with dihydroxyacetone phosphate to form quinolinate. The protein is Quinolinate synthase of Geobacter sp. (strain M21).